Here is a 493-residue protein sequence, read N- to C-terminus: Glutamate--tRNA ligase (493 aa).

The 'HIGH' region signature appears at 10–20; the sequence is PSPTGDPHVGT. A 'KMSKS' region motif is present at residues 251-255; the sequence is KLSKR. K254 lines the ATP pocket.

The protein belongs to the class-I aminoacyl-tRNA synthetase family. Glutamate--tRNA ligase type 1 subfamily. In terms of assembly, monomer.

It localises to the cytoplasm. It catalyses the reaction tRNA(Glu) + L-glutamate + ATP = L-glutamyl-tRNA(Glu) + AMP + diphosphate. Catalyzes the attachment of glutamate to tRNA(Glu) in a two-step reaction: glutamate is first activated by ATP to form Glu-AMP and then transferred to the acceptor end of tRNA(Glu). In Pseudomonas putida (strain ATCC 47054 / DSM 6125 / CFBP 8728 / NCIMB 11950 / KT2440), this protein is Glutamate--tRNA ligase.